We begin with the raw amino-acid sequence, 406 residues long: Lysophospholipid transporter LplT (406 aa).

11 helical membrane passes run 16 to 36, 53 to 73, 91 to 111, 139 to 159, 164 to 184, 227 to 247, 253 to 273, 285 to 305, 310 to 330, 349 to 369, and 372 to 392; these read MVAV…LLFA, ILQM…GQIA, AGAL…LVGV, MMEA…GILA, MAAL…NLFI, LFWG…PVAL, ATPT…AGAA, CLPA…QNSM, LLLI…NALL, LGEN…VKLG, and VVAV…LLWG.

The protein belongs to the major facilitator superfamily. LplT (TC 2.A.1.42) family.

The protein localises to the cell inner membrane. Its function is as follows. Catalyzes the facilitated diffusion of 2-acyl-glycero-3-phosphoethanolamine (2-acyl-GPE) into the cell. The chain is Lysophospholipid transporter LplT from Yersinia pestis bv. Antiqua (strain Antiqua).